The following is a 359-amino-acid chain: Type-1 angiotensin II receptor (359 aa).

Residues Met1 to Asn25 lie on the Extracellular side of the membrane. N-linked (GlcNAc...) asparagine glycosylation is present at Asn4. Angiotensin II is bound by residues Gln15 and Asp17. 2 disulfide bridges follow: Cys18/Cys274 and Cys101/Cys180. A helical transmembrane segment spans residues Tyr26–Phe55. The Cytoplasmic segment spans residues Tyr56–Thr61. A helical membrane pass occupies residues Val62–Ala89. Over Met90–Asn98 the chain is Extracellular. The helical transmembrane segment at Tyr99–Asp125 threads the bilayer. Residues Arg126–Thr141 are Cytoplasmic-facing. A helical transmembrane segment spans residues Met142–Ile165. Topologically, residues His166–Thr190 are extracellular. Arg167 lines the angiotensin II pocket. A glycan (N-linked (GlcNAc...) asparagine) is linked at Asn176. Residues Phe182, His183, and Tyr184 each coordinate angiotensin II. Asn188 carries an N-linked (GlcNAc...) asparagine glycan. Residues Leu191–Thr216 form a helical membrane-spanning segment. Lys199 provides a ligand contact to angiotensin II. Residues Leu217–Phe239 lie on the Cytoplasmic side of the membrane. Residues Lys240–Leu268 form a helical membrane-spanning segment. Over Gly269–Asp278 the chain is Extracellular. A helical transmembrane segment spans residues Ile279–Phe304. The Cytoplasmic portion of the chain corresponds to Leu305 to Glu359. The span at Ser335–Lys350 shows a compositional bias: polar residues. The segment at Ser335–Glu359 is disordered. Residue Cys355 is the site of S-palmitoyl cysteine attachment.

It belongs to the G-protein coupled receptor 1 family. Interacts with MAS1. Interacts with ARRB1. Interacts with FLNA (via filamin repeat 21); increases PKA-mediated phosphorylation of FLNA. C-terminal Ser or Thr residues may be phosphorylated.

It is found in the cell membrane. Its function is as follows. Receptor for angiotensin II, a vasoconstricting peptide, which acts as a key regulator of blood pressure and sodium retention by the kidney. The activated receptor in turn couples to G-alpha proteins G(q) (GNAQ, GNA11, GNA14 or GNA15) and thus activates phospholipase C and increases the cytosolic Ca(2+) concentrations, which in turn triggers cellular responses such as stimulation of protein kinase C. The sequence is that of Type-1 angiotensin II receptor (AGTR1) from Pan troglodytes (Chimpanzee).